The chain runs to 132 residues: Small ribosomal subunit protein uS8 (132 aa).

It belongs to the universal ribosomal protein uS8 family. Part of the 30S ribosomal subunit. Contacts proteins S5 and S12.

One of the primary rRNA binding proteins, it binds directly to 16S rRNA central domain where it helps coordinate assembly of the platform of the 30S subunit. This is Small ribosomal subunit protein uS8 from Leuconostoc mesenteroides subsp. mesenteroides (strain ATCC 8293 / DSM 20343 / BCRC 11652 / CCM 1803 / JCM 6124 / NCDO 523 / NBRC 100496 / NCIMB 8023 / NCTC 12954 / NRRL B-1118 / 37Y).